The sequence spans 503 residues: Nondiscriminating glutamyl-tRNA synthetase EARS2, mitochondrial (503 aa).

Residues 1 to 22 (MKILRGVSRQMCTSRPEVRVRF) constitute a mitochondrion transit peptide. Residue 21-23 (RFA) coordinates L-glutamate. Residues 26 to 34 (PTGFLHLGG) carry the 'HIGH' region motif. His-31 contributes to the ATP binding site. Residues Glu-57, 209–213 (YHLAS), and Arg-227 each bind L-glutamate. Residues Glu-230 and 265–269 (KLSKR) each bind ATP. The 'KMSKS' region signature appears at 265 to 269 (KLSKR).

This sequence belongs to the class-I aminoacyl-tRNA synthetase family. Glutamate--tRNA ligase type 1 subfamily.

The protein localises to the mitochondrion matrix. It catalyses the reaction tRNA(Glx) + L-glutamate + ATP = L-glutamyl-tRNA(Glx) + AMP + diphosphate. The catalysed reaction is tRNA(Glu) + L-glutamate + ATP = L-glutamyl-tRNA(Glu) + AMP + diphosphate. It carries out the reaction tRNA(Gln) + L-glutamate + ATP = L-glutamyl-tRNA(Gln) + AMP + diphosphate. Non-discriminating glutamyl-tRNA synthetase that catalyzes aminoacylation of both mitochondrial tRNA(Glu) and tRNA(Gln) and participates in RNA aminoacylation for mitochondrial protein translation. Attachs glutamate to tRNA(Glu) or tRNA(Gln) in a two-step reaction: glutamate is first activated by ATP to form Glu-AMP and then transferred to the acceptor end of tRNA(Glu) or tRNA(Gln). This chain is Nondiscriminating glutamyl-tRNA synthetase EARS2, mitochondrial, found in Danio rerio (Zebrafish).